We begin with the raw amino-acid sequence, 1379 residues long: Increased rDNA silencing protein 4 homolog (1379 aa).

8 disordered regions span residues 1–25 (MDAIHPVSLRNSKRHPLLHSERNLS), 138–159 (TSTRKRSLTVPTPRTSFPHHPR), 240–314 (EFDF…PLPS), 337–370 (SQPFKSAEPLSSAIPLPNPMSEKMRNGASKQAIM), 534–573 (ASKRAALSQQTESASKSSSNISEMCDSHPPSNFSISASQQ), 768–816 (TDLH…NDIG), 1047–1110 (DAPS…KDSQ), and 1168–1208 (AVHE…DGKY). The span at 250–259 (PSDKNLEKLK) shows a compositional bias: basic and acidic residues. Over residues 262 to 287 (ASKQASESQSLKNMESLSLARSSPIL) the composition is skewed to polar residues. The segment covering 541–555 (SQQTESASKSSSNIS) has biased composition (low complexity). Residues 562 to 573 (PPSNFSISASQQ) show a composition bias toward polar residues. Over residues 770-780 (LHRKPRRKHKS) the composition is skewed to basic residues. The segment covering 793 to 802 (DESPQSDEVE) has biased composition (acidic residues). The 90-residue stretch at 1240-1329 (AANKGYLLSK…DSVWLSSKRM (90 aa)) folds into the EH domain. The EF-hand domain occupies 1273–1308 (APTSVLAKIYDLVDRHHTGVLGRDEFIVGMFLIDQY).

It belongs to the IRS4 family.

Its function is as follows. Positive regulator of phosphatidylinositol 4,5-bisphosphate turnover and negatively regulates signaling through the cell integrity pathway. Involved in rDNA silencing. The protein is Increased rDNA silencing protein 4 homolog of Schizosaccharomyces pombe (strain 972 / ATCC 24843) (Fission yeast).